A 723-amino-acid polypeptide reads, in one-letter code: Fatty acid oxidation complex subunit alpha (723 aa).

The enoyl-CoA hydratase/isomerase stretch occupies residues 1–189; sequence MIYQANTLQV…KVGLLDAIVE (189 aa). Asp296 is a substrate binding site. Residues 311–723 form a 3-hydroxyacyl-CoA dehydrogenase region; it reads NKATERAAVL…FYDGQQASSL (413 aa). Residues Met325, Asp344, 401–403, Lys408, and Ser430 contribute to the NAD(+) site; that span reads VVE. His451 (for 3-hydroxyacyl-CoA dehydrogenase activity) is an active-site residue. Asn454 is a binding site for NAD(+). Substrate contacts are provided by Asn501 and Tyr661.

It in the N-terminal section; belongs to the enoyl-CoA hydratase/isomerase family. This sequence in the C-terminal section; belongs to the 3-hydroxyacyl-CoA dehydrogenase family. Heterotetramer of two alpha chains (FadB) and two beta chains (FadA).

The enzyme catalyses a (3S)-3-hydroxyacyl-CoA + NAD(+) = a 3-oxoacyl-CoA + NADH + H(+). The catalysed reaction is a (3S)-3-hydroxyacyl-CoA = a (2E)-enoyl-CoA + H2O. It carries out the reaction a 4-saturated-(3S)-3-hydroxyacyl-CoA = a (3E)-enoyl-CoA + H2O. It catalyses the reaction (3S)-3-hydroxybutanoyl-CoA = (3R)-3-hydroxybutanoyl-CoA. The enzyme catalyses a (3Z)-enoyl-CoA = a 4-saturated (2E)-enoyl-CoA. The catalysed reaction is a (3E)-enoyl-CoA = a 4-saturated (2E)-enoyl-CoA. It participates in lipid metabolism; fatty acid beta-oxidation. Involved in the aerobic and anaerobic degradation of long-chain fatty acids via beta-oxidation cycle. Catalyzes the formation of 3-oxoacyl-CoA from enoyl-CoA via L-3-hydroxyacyl-CoA. It can also use D-3-hydroxyacyl-CoA and cis-3-enoyl-CoA as substrate. The sequence is that of Fatty acid oxidation complex subunit alpha from Vibrio atlanticus (strain LGP32) (Vibrio splendidus (strain Mel32)).